Here is a 441-residue protein sequence, read N- to C-terminus: Tryptophan aminotransferase-related protein 1 (441 aa).

Pyridoxal 5'-phosphate contacts are provided by residues Y110, 152 to 153 (ST), N219, 239 to 242 (DLAY), 262 to 265 (TVSK), and R273. Residue K265 is modified to N6-(pyridoxal phosphate)lysine.

The protein belongs to the alliinase family. The cofactor is pyridoxal 5'-phosphate. Highly expressed in anthers. Expressed at low levels in ovaries.

It carries out the reaction L-tryptophan + 2-oxoglutarate = indole-3-pyruvate + L-glutamate. The protein operates within plant hormone metabolism; auxin biosynthesis. Its function is as follows. Probable tryptophan aminotransferase that may be involved in the regulation of auxin production in developing rice grains. This Oryza sativa subsp. japonica (Rice) protein is Tryptophan aminotransferase-related protein 1.